The following is a 277-amino-acid chain: Putative phosphoenolpyruvate synthase regulatory protein (277 aa).

157 to 164 (GVSRCGKT) lines the ADP pocket.

This sequence belongs to the pyruvate, phosphate/water dikinase regulatory protein family. PSRP subfamily.

The catalysed reaction is [pyruvate, water dikinase] + ADP = [pyruvate, water dikinase]-phosphate + AMP + H(+). It carries out the reaction [pyruvate, water dikinase]-phosphate + phosphate + H(+) = [pyruvate, water dikinase] + diphosphate. In terms of biological role, bifunctional serine/threonine kinase and phosphorylase involved in the regulation of the phosphoenolpyruvate synthase (PEPS) by catalyzing its phosphorylation/dephosphorylation. The chain is Putative phosphoenolpyruvate synthase regulatory protein from Photobacterium profundum (strain SS9).